The chain runs to 406 residues: Peptidase T (406 aa).

Residue His-77 participates in Zn(2+) binding. Asp-79 is an active-site residue. Asp-139 is a Zn(2+) binding site. The active-site Proton acceptor is the Glu-173. Residues Glu-174, Asp-196, and His-377 each coordinate Zn(2+).

It belongs to the peptidase M20B family. Zn(2+) serves as cofactor.

It is found in the cytoplasm. It catalyses the reaction Release of the N-terminal residue from a tripeptide.. Functionally, cleaves the N-terminal amino acid of tripeptides. The chain is Peptidase T from Parabacteroides distasonis (strain ATCC 8503 / DSM 20701 / CIP 104284 / JCM 5825 / NCTC 11152).